Consider the following 1860-residue polypeptide: MGWGSRCCCPGRLDLLCVLALLGGCLLPVCRTRVYTNHWAVKIAGGFPEANRIASKYGFINIGQIGALKDYYHFYHSRTIKRSVISSRGTHSFISMEPKVEWIQQQVVKKRTKRDYDFSRAQSTYFNDPKWPSMWYMHCSDNTHPCQSDMNIEGAWKRGYTGKNIVVTILDDGIERTHPDLMQNYDALASCDVNGNDLDPMPRYDASNENKHGTRCAGEVAAAANNSHCTVGIAFNAKIGGVRMLDGDVTDMVEAKSVSFNPQHVHIYSASWGPDDDGKTVDGPAPLTRQAFENGVRMGRRGLGSVFVWASGNGGRSKDHCSCDGYTNSIYTISISSTAESGKKPWYLEECSSTLATTYSSGESYDKKIITTDLRQRCTDNHTGTSASAPMAAGIIALALEANPFLTWRDVQHVIVRTSRAGHLNANDWKTNAAGFKVSHLYGFGLMDAEAMVMEAEKWTTVPRQHVCVESTDRQIKTIRPNSAVRSIYKASGCSDNPNRHVNYLEHVVVRITITHPRRGDLAIYLTSPSGTRSQLLANRLFDHSMEGFKNWEFMTIHCWGERAAGDWVLEVYDTPSQLRNFKTPGKLKEWSLVLYGTSVQPYSPTNEFPKVERFRYSRVEDPTDDYGTEDYAGPCDPECSEVGCDGPGPDHCNDCLHYYYKLKNNTRICVSSCPPGHYHADKKRCRKCAPNCESCFGSHGDQCMSCKYGYFLNEETNSCVTHCPDGSYQDTKKNLCRKCSENCKTCTEFHNCTECRDGLSLQGSRCSVSCEDGRYFNGQDCQPCHRFCATCAGAGADGCINCTEGYFMEDGRCVQSCSISYYFDHSSENGYKSCKKCDISCLTCNGPGFKNCTSCPSGYLLDLGMCQMGAICKDGEYVDEHGHCQTCEASCAKCQGPTQEDCTTCPMTRIFDDGRCVSNCPSWKFEFENQCHPCHHTCQRCQGSGPTHCTSCGADNYGREHFLYQGECGDSCPEGHYATEGNTCLPCPDNCELCHSVHVCTRCMKGYFIAPTNHTCQKLECGQGEVQDPDYEECVPCEEGCLGCSLDDPGTCTSCAMGYYRFDHHCYKTCPEKTYSEEVECKACDSNCGSCDQNGCYWCEEGFFLLGGSCVRKCGPGFYGDQEMGECESCHRACETCTGPGHDECSSCQEGLQLLRGMCVHATKTQEEGKFWNDILRKLQPCHSSCKTCNGSATLCTSCPKGAYLLAQACVSSCPQGTWPSVRSGSCENCTEACAICSGADLCKKCQMQPGHPLFLHEGRCYSKCPEGSYAEDGICERCSSPCRTCEGNATNCHSCEGGHVLHHGVCQENCPERHVAVKGVCKHCPEMCQDCIHEKTCKECTPEFFLHDDMCHQSCPRGFYADSRHCVPCHKDCLECSGPKADDCELCLESSWVLYDGLCLEECPAGTYYEKETKECRDCHKSCLTCSSSGTCTTCQKGLIMNPRGSCMANEKCSPSEYWDEDAPGCKPCHVKCFHCMGPAEDQCQTCPMNSLLLNTTCVKDCPEGYYADEDSNRCAHCHSSCRTCEGRHSRQCHSCRPGWFQLGKECLLQCREGYYADNSTGRCERCNRSCKGCQGPRPTDCLSCDRFFFLLRSKGECHRSCPDHYYVEQSTQTCERCHPTCDQCKGKGALNCLSCVWSYHLMGGICTSDCLVGEYRVGEGEKFNCEKCHESCMECKGPGAKNCTLCPANLVLHMDDSHCLHCCNTSDPPSAQECCDCQDTTDECILRTSKVRPATEHFKTALFITSSMMLVLLLGAAVVVWKKSRGRVQPAAKAGYEKLADPNKSYSSYKSSYRESTSFEEDQVIEYRDRDYDEDDDDDIVYMGQDGTVYRKFKYGLLDDDDIDELEYDDESYSYYQ.

Positions 1-32 (MGWGSRCCCPGRLDLLCVLALLGGCLLPVCRT) are cleaved as a signal peptide. Positions 33–114 (RVYTNHWAVK…QQVVKKRTKR (82 aa)) are excised as a propeptide. The Extracellular segment spans residues 115–1743 (DYDFSRAQST…VRPATEHFKT (1629 aa)). The Peptidase S8 domain occupies 134–453 (MWYMHCSDNT…FGLMDAEAMV (320 aa)). Catalysis depends on charge relay system residues Asp-171 and His-212. Asn-225 and Asn-381 each carry an N-linked (GlcNAc...) asparagine glycan. Ser-386 (charge relay system) is an active-site residue. The region spanning 461-601 (TVPRQHVCVE…SLVLYGTSVQ (141 aa)) is the P/Homo B domain. The short motif at 519-521 (RGD) is the Cell attachment site element. 22 FU repeats span residues 630 to 680 (EDYA…GHYH), 683 to 730 (KKRC…GSYQ), 734 to 777 (KNLC…GRYF), 779 to 824 (GQDC…SYYF), 832 to 879 (YKSC…GEYV), 882 to 927 (HGHC…WKFE), 929 to 979 (ENQC…GHYA), 982 to 1028 (GNTC…GEVQ), 1032 to 1077 (YEEC…KTYS), 1079 to 1121 (EVEC…GFYG), 1125 to 1168 (MGEC…KTQE), 1177 to 1221 (LRKL…GTWP), 1225 to 1272 (SGSC…GSYA), 1274 to 1318 (DGIC…RHVA), 1320 to 1363 (KGVC…GFYA), 1365 to 1411 (SRHC…GTYY), 1415 to 1461 (TKEC…SEYW), 1465 to 1510 (APGC…GYYA), 1514 to 1559 (SNRC…GYYA), 1563 to 1610 (TGRC…HYYV), 1614 to 1659 (TQTC…GEYR), and 1665 to 1712 (KFNC…SDPP). The tract at residues 636–1727 (CDPECSEVGC…CDCQDTTDEC (1092 aa)) is CRM (Cys-rich motif). Residue Asn-665 is glycosylated (N-linked (GlcNAc...) asparagine). N-linked (GlcNAc...) asparagine glycans are attached at residues Asn-752, Asn-802, and Asn-852. The region spanning 869–913 (MGAICKDGEYVDEHGHCQTCEASCAKCQGPTQEDCTTCPMTRIFD) is the PLAC domain. An N-linked (GlcNAc...) asparagine glycan is attached at Asn-1014. A glycan (N-linked (GlcNAc...) asparagine) is linked at Asn-1191. N-linked (GlcNAc...) asparagine glycosylation occurs at Asn-1290. N-linked (GlcNAc...) asparagine glycosylation is present at Asn-1497. Asn-1685 and Asn-1707 each carry an N-linked (GlcNAc...) asparagine glycan. The chain crosses the membrane as a helical span at residues 1744-1764 (ALFITSSMMLVLLLGAAVVVW). The Cytoplasmic segment spans residues 1765–1860 (KKSRGRVQPA…YDDESYSYYQ (96 aa)). 2 AC regions span residues 1807-1826 (VIEY…IVYM) and 1838-1860 (YGLL…SYYQ).

Belongs to the peptidase S8 family. In terms of tissue distribution, expressed in T-lymphocytes.

It is found in the secreted. The protein resides in the endomembrane system. Serine endoprotease that processes various proproteins by cleavage at paired basic amino acids, recognizing the RXXX[KR]R consensus motif. Likely functions in the constitutive and regulated secretory pathways. Plays an essential role in pregnancy establishment by proteolytic activation of a number of important factors such as BMP2, CALD1 and alpha-integrins. This is Proprotein convertase subtilisin/kexin type 5 (PCSK5) from Homo sapiens (Human).